Here is a 164-residue protein sequence, read N- to C-terminus: Kunitz-type proteinase inhibitor BbCI (164 aa).

It belongs to the protease inhibitor I3 (leguminous Kunitz-type inhibitor) family.

The protein localises to the secreted. Functionally, inhibits T.cruzi cruzipain. This chain is Kunitz-type proteinase inhibitor BbCI, found in Bauhinia bauhinioides (Perlebia bauhinoides).